Consider the following 370-residue polypeptide: Chorismate synthase (370 aa).

Position 47 (arginine 47) interacts with NADP(+). FMN-binding positions include 124–126 (RSS), glycine 286, 301–305 (KPTAT), and arginine 327.

This sequence belongs to the chorismate synthase family. In terms of assembly, homotetramer. It depends on FMNH2 as a cofactor.

The catalysed reaction is 5-O-(1-carboxyvinyl)-3-phosphoshikimate = chorismate + phosphate. The protein operates within metabolic intermediate biosynthesis; chorismate biosynthesis; chorismate from D-erythrose 4-phosphate and phosphoenolpyruvate: step 7/7. Its function is as follows. Catalyzes the anti-1,4-elimination of the C-3 phosphate and the C-6 proR hydrogen from 5-enolpyruvylshikimate-3-phosphate (EPSP) to yield chorismate, which is the branch point compound that serves as the starting substrate for the three terminal pathways of aromatic amino acid biosynthesis. This reaction introduces a second double bond into the aromatic ring system. This is Chorismate synthase from Trichodesmium erythraeum (strain IMS101).